A 216-amino-acid chain; its full sequence is GTP cyclohydrolase 1 (216 aa).

Residues 1–33 (MPQARGEGATPPTSLPNPSLKGVPLPDNPNNLE) form a disordered region. Over residues 24–33 (PLPDNPNNLE) the composition is skewed to low complexity. Cys102, His105, and Cys173 together coordinate Zn(2+).

This sequence belongs to the GTP cyclohydrolase I family. Toroid-shaped homodecamer, composed of two pentamers of five dimers.

The catalysed reaction is GTP + H2O = 7,8-dihydroneopterin 3'-triphosphate + formate + H(+). The protein operates within cofactor biosynthesis; 7,8-dihydroneopterin triphosphate biosynthesis; 7,8-dihydroneopterin triphosphate from GTP: step 1/1. The sequence is that of GTP cyclohydrolase 1 (folE) from Deinococcus radiodurans (strain ATCC 13939 / DSM 20539 / JCM 16871 / CCUG 27074 / LMG 4051 / NBRC 15346 / NCIMB 9279 / VKM B-1422 / R1).